Reading from the N-terminus, the 448-residue chain is Eukaryotic translation initiation factor 3 subunit E (448 aa).

In terms of domain architecture, PCI spans 254-423 (TDLFFSPAYI…GTVIMNHPPQ (170 aa)).

It belongs to the eIF-3 subunit E family. As to quaternary structure, component of the eukaryotic translation initiation factor 3 (eIF-3) complex.

The protein localises to the cytoplasm. Component of the eukaryotic translation initiation factor 3 (eIF-3) complex, which is involved in protein synthesis of a specialized repertoire of mRNAs and, together with other initiation factors, stimulates binding of mRNA and methionyl-tRNAi to the 40S ribosome. The eIF-3 complex specifically targets and initiates translation of a subset of mRNAs involved in cell proliferation. The chain is Eukaryotic translation initiation factor 3 subunit E (int6) from Emericella nidulans (strain FGSC A4 / ATCC 38163 / CBS 112.46 / NRRL 194 / M139) (Aspergillus nidulans).